Reading from the N-terminus, the 348-residue chain is Oxygen-dependent coproporphyrinogen-III oxidase (348 aa).

Serine 104 provides a ligand contact to substrate. A divalent metal cation contacts are provided by histidine 108 and histidine 118. Histidine 118 (proton donor) is an active-site residue. 120 to 122 (NYR) is a binding site for substrate. A divalent metal cation-binding residues include histidine 152 and histidine 182. The segment at 272-307 (YAEFNLVWDRGTIFGLQTNGRTESILMSLPPLARWE) is important for dimerization.

The protein belongs to the aerobic coproporphyrinogen-III oxidase family. In terms of assembly, homodimer. Requires a divalent metal cation as cofactor.

The protein resides in the cytoplasm. The catalysed reaction is coproporphyrinogen III + O2 + 2 H(+) = protoporphyrinogen IX + 2 CO2 + 2 H2O. It functions in the pathway porphyrin-containing compound metabolism; protoporphyrin-IX biosynthesis; protoporphyrinogen-IX from coproporphyrinogen-III (O2 route): step 1/1. Its function is as follows. Involved in the heme and chlorophyll biosynthesis. Catalyzes the aerobic oxidative decarboxylation of propionate groups of rings A and B of coproporphyrinogen-III to yield the vinyl groups in protoporphyrinogen-IX. In Prochlorococcus marinus (strain NATL1A), this protein is Oxygen-dependent coproporphyrinogen-III oxidase.